The primary structure comprises 636 residues: Threonine--tRNA ligase (636 aa).

The region spanning 1–63 (MSSISIALPD…KDDSRVEIIT (63 aa)) is the TGS domain. The interval 243–534 (DHRRLGRELD…LIEHYAGNFP (292 aa)) is catalytic. Residues C335, H386, and H511 each coordinate Zn(2+).

The protein belongs to the class-II aminoacyl-tRNA synthetase family. Homodimer. Zn(2+) serves as cofactor.

The protein localises to the cytoplasm. The catalysed reaction is tRNA(Thr) + L-threonine + ATP = L-threonyl-tRNA(Thr) + AMP + diphosphate + H(+). In terms of biological role, catalyzes the attachment of threonine to tRNA(Thr) in a two-step reaction: L-threonine is first activated by ATP to form Thr-AMP and then transferred to the acceptor end of tRNA(Thr). Also edits incorrectly charged L-seryl-tRNA(Thr). The chain is Threonine--tRNA ligase from Pelobacter propionicus (strain DSM 2379 / NBRC 103807 / OttBd1).